We begin with the raw amino-acid sequence, 101 residues long: Urease subunit beta (101 aa).

This sequence belongs to the urease beta subunit family. Heterotrimer of UreA (gamma), UreB (beta) and UreC (alpha) subunits. Three heterotrimers associate to form the active enzyme.

The protein resides in the cytoplasm. The enzyme catalyses urea + 2 H2O + H(+) = hydrogencarbonate + 2 NH4(+). The protein operates within nitrogen metabolism; urea degradation; CO(2) and NH(3) from urea (urease route): step 1/1. This is Urease subunit beta from Dinoroseobacter shibae (strain DSM 16493 / NCIMB 14021 / DFL 12).